The following is a 326-amino-acid chain: MKSNKTIFLILLFLINFNSIYSFNFKKEIKISNDKINLPTYNPWIFQDRFNLYSILINSTNIPVFGEDNSNNCLHGLQLQFEWQNRSGRLEINQGHVNTKSWWGDMNYYLSIIPYLSAMKMGLVPVVEIVSINDQRFCSTYEDCDQEVLNNWDNFFQQIINIRNNGSEGDDQQLLKFMWTAHIGSIDKATKLFTDSLLLLPKNELRFGNGWAHFVDVIATVNFNTNYSTVYHLGQQLPPIMLNSNDTHPSSIESFTKEQRNVVLTMYEINDLSSNNLVWNSFMYLLKKMTKNEICRNLINNEINIFLNSPVPTIIEILFDILTNNC.

Residues 1 to 22 (MKSNKTIFLILLFLINFNSIYS) form the signal peptide. 5 N-linked (GlcNAc...) asparagine glycosylation sites follow: Asn-58, Asn-85, Asn-165, Asn-226, and Asn-245.

This sequence belongs to the LEG1 family.

It is found in the secreted. This Dictyostelium discoideum (Social amoeba) protein is Protein LEG1 homolog.